A 105-amino-acid polypeptide reads, in one-letter code: Large ribosomal subunit protein uL24 (105 aa).

It belongs to the universal ribosomal protein uL24 family. In terms of assembly, part of the 50S ribosomal subunit.

In terms of biological role, one of two assembly initiator proteins, it binds directly to the 5'-end of the 23S rRNA, where it nucleates assembly of the 50S subunit. One of the proteins that surrounds the polypeptide exit tunnel on the outside of the subunit. The protein is Large ribosomal subunit protein uL24 of Halorhodospira halophila (strain DSM 244 / SL1) (Ectothiorhodospira halophila (strain DSM 244 / SL1)).